The chain runs to 819 residues: Leucine--tRNA ligase (819 aa).

The 'HIGH' region motif lies at 40 to 51 (PYPSGAGLHVGH). Positions 600 to 604 (KMSKS) match the 'KMSKS' region motif. Lysine 603 contacts ATP.

It belongs to the class-I aminoacyl-tRNA synthetase family.

The protein localises to the cytoplasm. The catalysed reaction is tRNA(Leu) + L-leucine + ATP = L-leucyl-tRNA(Leu) + AMP + diphosphate. This chain is Leucine--tRNA ligase, found in Chlamydia trachomatis serovar A (strain ATCC VR-571B / DSM 19440 / HAR-13).